Consider the following 78-residue polypeptide: DNA-directed RNA polymerase subunit omega (78 aa).

It belongs to the RNA polymerase subunit omega family. As to quaternary structure, in cyanobacteria the RNAP catalytic core is composed of 2 alpha, 1 beta, 1 beta', 1 gamma and 1 omega subunit. When a sigma factor is associated with the core the holoenzyme is formed, which can initiate transcription.

The enzyme catalyses RNA(n) + a ribonucleoside 5'-triphosphate = RNA(n+1) + diphosphate. Promotes RNA polymerase assembly. Latches the N- and C-terminal regions of the beta' subunit thereby facilitating its interaction with the beta and alpha subunits. The chain is DNA-directed RNA polymerase subunit omega from Prochlorococcus marinus (strain MIT 9301).